Here is a 97-residue protein sequence, read N- to C-terminus: Defensin-A2 (97 aa).

The first 19 residues, 1-19, serve as a signal peptide directing secretion; that stretch reads MRTLSLLLALLFLAAQTLA. Residues 20-61 constitute a propeptide that is removed on maturation; that stretch reads QPIDEGAEEVITEEPEITETQDPTTIMLIERGIGGDSTDATR. 3 disulfides stabilise this stretch: cysteine 66–cysteine 93, cysteine 68–cysteine 82, and cysteine 72–cysteine 92. Positions 96–97 are excised as a propeptide; that stretch reads TS.

Belongs to the alpha-defensin family. As to expression, highly expressed in intestine, expressed at lower levels in spleen, and at very low levels in kidney and lung.

The protein resides in the secreted. In terms of biological role, has antimicrobial activity. The polypeptide is Defensin-A2 (Ornithorhynchus anatinus (Duckbill platypus)).